The following is a 565-amino-acid chain: Polycomb protein EED (565 aa).

4 WD repeats span residues 89–133 (DDGN…LYRT), 136–176 (GHGG…EKQP), 185–224 (GHSY…NEHM), and 240–278 (IHNN…SDDP). A disordered region spans residues 417–488 (VKKAPGAAGS…SASPDPDSPF (72 aa)). Over residues 429 to 450 (GTAANGGHNNNNNNNNNNNNNN) the composition is skewed to low complexity. Residues 451-468 (HETGSQRSFSATNNLSNS) are compositionally biased toward polar residues. The WD 5 repeat unit spans residues 519 to 559 (IDGAFVGRQVGWSPEGEWCVVVGNGNRALIYQRWGKERGLG).

The protein belongs to the WD repeat ESC family. Component of the polycomb repressive complex 2 (PRC2) that consists of four core subunits icluding EZH2, EED, SUZ12, and RBBP4, among which EZH2 is the catalytic subunit and which minimally requires EED and SUZ12 for catalysis.

The protein resides in the nucleus. Its function is as follows. Component of the of the Polycomb Repressive Complex 2 (PRC2), a histone H3 lysine methyltransferase responsible for generating mono-, di-, and tri-methylation on Lys27 (H3K27me1, H3K27me2 and H3K27me3). The tri-methylated form is known to be critical in gene repression, and its proper placement is essential in defining repression patterns during development. EED is not a catalytic subunit but is required for the complex regulation of histone H3 lysine methylation by EZH2. This Chaetomium thermophilum (strain DSM 1495 / CBS 144.50 / IMI 039719) (Thermochaetoides thermophila) protein is Polycomb protein EED.